Consider the following 565-residue polypeptide: Ubiquitin carboxyl-terminal hydrolase 21 (565 aa).

Residues 1 to 14 (MPQASEHRLGRTRE) show a composition bias toward basic and acidic residues. Disordered stretches follow at residues 1–103 (MPQA…LPLP), 109–128 (ARSK…ALGG), and 142–163 (LALR…LGGF). A compositionally biased stretch (pro residues) spans 42 to 57 (APGPNPMLRPLPPRPG). Positions 58–70 (PPEERLKKLELGR) are enriched in basic and acidic residues. Over residues 71-82 (GRTSGPRPSGPL) the composition is skewed to low complexity. The Nuclear export signal motif lies at 134–152 (ELGAALSRLALRPEPPPLR). One can recognise a USP domain in the interval 212-558 (VGLRNLGNTC…EGYVLFYQLM (347 aa)). Cys221 acts as the Nucleophile in catalysis. Cys384, Cys387, Cys437, and Cys440 together coordinate Zn(2+). Residue His518 is the Proton acceptor of the active site.

This sequence belongs to the peptidase C19 family. USP21 subfamily. Interacts with BEND3.

The protein resides in the cytoplasm. The protein localises to the nucleus. The enzyme catalyses Thiol-dependent hydrolysis of ester, thioester, amide, peptide and isopeptide bonds formed by the C-terminal Gly of ubiquitin (a 76-residue protein attached to proteins as an intracellular targeting signal).. In terms of biological role, deubiquitinating enzyme that hydrolyzes 'Lys-6'- and 'Lys-11'-linked polyubiquitin. Also hydrolyzes heterotypic (mixed and branched) and homotypic chains. Important regulator of energy metabolism. Glucose and fatty acids trigger its nuclear translocation by CBP-dependent acetylation. In the nucleus, deubiquitinates and stabilizes the nuclear receptor PPARD regulating the expression of various genes involved in glucose and lipid metabolism and oxidative phosphorylation. Also acts as a negative regulator of the ribosome quality control (RQC) by mediating deubiquitination of 40S ribosomal proteins RPS10/eS10 and RPS20/uS10, thereby antagonizing ZNF598-mediated 40S ubiquitination. The polypeptide is Ubiquitin carboxyl-terminal hydrolase 21 (USP21) (Bos taurus (Bovine)).